Consider the following 394-residue polypeptide: MTNSNRIKLTWISFFSYALTGALVIVTGMVMGDIANYFQLPVSSMSNTFTFLNAGILISIFLNAWLMEIVPLKTQLRFGFVLMVAAVAGLMVSHSIALFSVSMFVLGLVSGITMSIGTFLITHMYEGRQRGARLLFTDSFFSMAGMIFPMVAAVLLARSIEWYWVYACIGLVYVAIFVLTFGCEFPVLGKKAEQSTQPVAKEKWGIGVLFLSVAALCYILGQLGFISWVPEYAKGLGMSLNDAGKLVSDFWMSYMFGMWAFSFILRFFDLQRILTVLAGLATVLMYLFINGAPEHMAWFILTLGFFSSAIYTSIITLGSLQTKVASPKLVNFVLTCGTIGTMLTFVVTGPIVAHSGPLAALQTANGLYAVVFVMCLILGFVTRHRQHNTVAASH.

12 helical membrane-spanning segments follow: residues 11–31 (WISF…GMVM), 51–71 (FLNA…EIVP), 78–98 (FGFV…SIAL), 101–121 (VSMF…TFLI), 134–154 (LLFT…VAAV), 162–182 (WYWV…LTFG), 206–226 (IGVL…LGFI), 250–270 (FWMS…FFDL), 273–293 (ILTV…NGAP), 297–317 (AWFI…IITL), 332–352 (FVLT…GPIV), and 361–381 (LQTA…LGFV).

The protein belongs to the major facilitator superfamily. TsgA family.

It is found in the cell inner membrane. This chain is Protein TsgA homolog, found in Enterobacter sp. (strain 638).